The chain runs to 164 residues: Biotin carboxyl carrier protein of acetyl-CoA carboxylase (164 aa).

The 77-residue stretch at 86–162 (GDFIVSPLVG…QFGSKLFRIV (77 aa)) folds into the Biotinyl-binding domain. Lysine 128 is subject to N6-biotinyllysine.

In terms of assembly, homodimer.

It functions in the pathway lipid metabolism; fatty acid biosynthesis. This protein is a component of the acetyl coenzyme A carboxylase complex; first, biotin carboxylase catalyzes the carboxylation of the carrier protein and then the transcarboxylase transfers the carboxyl group to form malonyl-CoA. The protein is Biotin carboxyl carrier protein of acetyl-CoA carboxylase (accB) of Chlamydia trachomatis serovar D (strain ATCC VR-885 / DSM 19411 / UW-3/Cx).